A 124-amino-acid chain; its full sequence is Large ribosomal subunit protein bL12 (124 aa).

The protein belongs to the bacterial ribosomal protein bL12 family. In terms of assembly, homodimer. Part of the ribosomal stalk of the 50S ribosomal subunit. Forms a multimeric L10(L12)X complex, where L10 forms an elongated spine to which 2 to 4 L12 dimers bind in a sequential fashion. Binds GTP-bound translation factors.

Functionally, forms part of the ribosomal stalk which helps the ribosome interact with GTP-bound translation factors. Is thus essential for accurate translation. The polypeptide is Large ribosomal subunit protein bL12 (Brucella abortus (strain S19)).